We begin with the raw amino-acid sequence, 201 residues long: Fimbrial protein FimX (201 aa).

The N-terminal stretch at Met1–Ala21 is a signal peptide. Cysteines 37 and 79 form a disulfide.

The protein belongs to the fimbrial protein family.

It is found in the fimbrium. Its function is as follows. Bordetella pertussis is the causative agent of whooping cough. An essential step in the disease process is the attachment of the bacteria to the ciliated epithelium of the respiratory tract, enabling the organism to resist normal host-clearance mechanisms. It is unclear which bacterial cell surface component are responsible for adherence but the fimbriae of B.pertussis are prime candidates for being involved in this process. This Bordetella pertussis (strain Tohama I / ATCC BAA-589 / NCTC 13251) protein is Fimbrial protein FimX (fimX).